A 248-amino-acid polypeptide reads, in one-letter code: Protein maestro (248 aa).

Residues 1-21 (MDQRQRRILGQPLSIPTSQPK) are disordered. An HEAT repeat occupies 128–163 (SFFIDITLQTRTLLDDENDSLRYSAFVLFGQLAAFA).

As to expression, ubiquitous.

The protein localises to the nucleus. The protein resides in the nucleolus. This is Protein maestro (MRO) from Homo sapiens (Human).